We begin with the raw amino-acid sequence, 243 residues long: Glutathione S-transferase omega-2 (243 aa).

The region spanning 22–101 (GLIRIYSMRF…YLDDAYPGRK (80 aa)) is the GST N-terminal domain. C32 (nucleophile) is an active-site residue. Residues K59, I72, and 85–86 (ES) each bind glutathione. Residues 106–231 (DPYERARQKM…IFQGFLNLYF (126 aa)) enclose the GST C-terminal domain.

Belongs to the GST superfamily. Omega family. As to expression, expressed in a range of tissues, including the liver, kidney, skeletal muscle and prostate. Strongest expression in the testis.

It carries out the reaction RX + glutathione = an S-substituted glutathione + a halide anion + H(+). The enzyme catalyses L-dehydroascorbate + 2 glutathione = glutathione disulfide + L-ascorbate. It catalyses the reaction methylarsonate + 2 glutathione + H(+) = methylarsonous acid + glutathione disulfide + H2O. Functionally, exhibits glutathione-dependent thiol transferase activity. Has high dehydroascorbate reductase activity and may contribute to the recycling of ascorbic acid. Participates in the biotransformation of inorganic arsenic and reduces monomethylarsonic acid (MMA). The polypeptide is Glutathione S-transferase omega-2 (GSTO2) (Homo sapiens (Human)).